Here is a 243-residue protein sequence, read N- to C-terminus: Carboxy-S-adenosyl-L-methionine synthase (243 aa).

S-adenosyl-L-methionine contacts are provided by residues Tyr-40, 65 to 67, 90 to 91, 118 to 119, Asn-133, and Arg-200; these read GCS, DN, and DI.

Belongs to the class I-like SAM-binding methyltransferase superfamily. Cx-SAM synthase family. In terms of assembly, homodimer.

The catalysed reaction is prephenate + S-adenosyl-L-methionine = carboxy-S-adenosyl-L-methionine + 3-phenylpyruvate + H2O. Its function is as follows. Catalyzes the conversion of S-adenosyl-L-methionine (SAM) to carboxy-S-adenosyl-L-methionine (Cx-SAM). The polypeptide is Carboxy-S-adenosyl-L-methionine synthase (Shewanella halifaxensis (strain HAW-EB4)).